A 514-amino-acid polypeptide reads, in one-letter code: Sugar transport protein 11 (514 aa).

Residues methionine 1 to arginine 19 lie on the Cytoplasmic side of the membrane. A helical transmembrane segment spans residues valine 20–tyrosine 40. The Extracellular segment spans residues aspartate 41–glutamate 82. A helical membrane pass occupies residues leucine 83–serine 103. Topologically, residues threonine 104–lysine 112 are cytoplasmic. A helical transmembrane segment spans residues valine 113 to isoleucine 133. Topologically, residues asparagine 134–methionine 137 are extracellular. Residues leucine 138–leucine 158 form a helical membrane-spanning segment. Topologically, residues tyrosine 159–arginine 169 are cytoplasmic. The helical transmembrane segment at glycine 170–valine 190 threads the bilayer. At asparagine 191 to arginine 204 the chain is on the extracellular side. A helical transmembrane segment spans residues leucine 205–proline 225. Residues aspartate 226–threonine 290 lie on the Cytoplasmic side of the membrane. A helical transmembrane segment spans residues phenylalanine 291–leucine 311. At phenylalanine 312–aspartate 320 the chain is on the extracellular side. Residues alanine 321 to isoleucine 341 traverse the membrane as a helical segment. Over tyrosine 342–arginine 350 the chain is Cytoplasmic. Residues alanine 351–isoleucine 371 form a helical membrane-spanning segment. Over glycine 372–aspartate 389 the chain is Extracellular. Residues isoleucine 390–glycine 410 form a helical membrane-spanning segment. The Cytoplasmic segment spans residues tryptophan 411–serine 428. A helical membrane pass occupies residues leucine 429 to leucine 449. Residues cysteine 450–lysine 453 are Extracellular-facing. The chain crosses the membrane as a helical span at residues phenylalanine 454–leucine 474. Residues leucine 475–phenylalanine 514 lie on the Cytoplasmic side of the membrane.

This sequence belongs to the major facilitator superfamily. Sugar transporter (TC 2.A.1.1) family. Specifically expressed in germinating pollen and pollen tube (at protein level).

It is found in the cell membrane. Its activity is regulated as follows. Inhibited by uncouplers such as 2,4-dinitrophenol and carbonyl cyanide-m-chlorophenyl-hydrazone. Mediates an active uptake of hexoses, probably by sugar/hydrogen symport. Can transport glucose, galactose, mannose, xylose and 3-O-methylglucose, but not fructose and ribose. The sequence is that of Sugar transport protein 11 (STP11) from Arabidopsis thaliana (Mouse-ear cress).